The primary structure comprises 165 residues: Putative pre-16S rRNA nuclease (165 aa).

This sequence belongs to the YqgF nuclease family.

It localises to the cytoplasm. Could be a nuclease involved in processing of the 5'-end of pre-16S rRNA. The polypeptide is Putative pre-16S rRNA nuclease (Sinorhizobium medicae (strain WSM419) (Ensifer medicae)).